Here is a 553-residue protein sequence, read N- to C-terminus: Salicylyl-CoA synthase / salicylate adenylyltransferase (553 aa).

ATP is bound at residue Gly-203. 246–247 (HN) provides a ligand contact to substrate. 5 residues coordinate ATP: Gly-320, Val-342, Asp-426, Arg-441, and Lys-533. Residue Lys-533 coordinates substrate.

This sequence belongs to the ATP-dependent AMP-binding enzyme family.

It carries out the reaction salicylate + ATP + CoA = 2-hydroxybenzoyl-CoA + AMP + diphosphate. In terms of biological role, involved in the degradation of salicylate via a pathway involving coenzyme A derivative. Catalyzes the conversion of salicylate to salicyloyl-CoA via the formation of a salicylate-adenylate intermediate. The substrate specificity is strong, since benzoate, 3-hydroxybenzoate, 4-hydroxybenzoate, gentisate, 2-aminobenzoate, aminobenzoate, salicylamide, salicylaldoxime and 2-hydroxyphenyl acetate cannot substitute for salicylate. The protein is Salicylyl-CoA synthase / salicylate adenylyltransferase of Streptomyces sp.